The chain runs to 204 residues: MNAYRLYLVTDDQQDLPTLKHVVRKAVEGGVTMVQVREKHGDVREFIERAQAVKTILEGTGVPLIINDRVDVALAVDADGVHLGQSDMPAEIARQLIGPNKILGLSIETEDQLAEADSLPIDYIGLSAIFATPTKTNTKKHWGIGGLKMALNTTSLPIVAIGGINETNIPALSATGVHGLALVSAICHAENPTKAAEYLLSLMD.

4-amino-2-methyl-5-(diphosphooxymethyl)pyrimidine-binding positions include 35–39 (QVREK) and Asn-67. Positions 68 and 87 each coordinate Mg(2+). Residue Ser-106 participates in 4-amino-2-methyl-5-(diphosphooxymethyl)pyrimidine binding. 132-134 (TPT) lines the 2-[(2R,5Z)-2-carboxy-4-methylthiazol-5(2H)-ylidene]ethyl phosphate pocket. Position 135 (Lys-135) interacts with 4-amino-2-methyl-5-(diphosphooxymethyl)pyrimidine. 2-[(2R,5Z)-2-carboxy-4-methylthiazol-5(2H)-ylidene]ethyl phosphate is bound by residues Gly-163 and 183–184 (VS).

Belongs to the thiamine-phosphate synthase family. It depends on Mg(2+) as a cofactor.

It catalyses the reaction 2-[(2R,5Z)-2-carboxy-4-methylthiazol-5(2H)-ylidene]ethyl phosphate + 4-amino-2-methyl-5-(diphosphooxymethyl)pyrimidine + 2 H(+) = thiamine phosphate + CO2 + diphosphate. The catalysed reaction is 2-(2-carboxy-4-methylthiazol-5-yl)ethyl phosphate + 4-amino-2-methyl-5-(diphosphooxymethyl)pyrimidine + 2 H(+) = thiamine phosphate + CO2 + diphosphate. It carries out the reaction 4-methyl-5-(2-phosphooxyethyl)-thiazole + 4-amino-2-methyl-5-(diphosphooxymethyl)pyrimidine + H(+) = thiamine phosphate + diphosphate. The protein operates within cofactor biosynthesis; thiamine diphosphate biosynthesis; thiamine phosphate from 4-amino-2-methyl-5-diphosphomethylpyrimidine and 4-methyl-5-(2-phosphoethyl)-thiazole: step 1/1. Condenses 4-methyl-5-(beta-hydroxyethyl)thiazole monophosphate (THZ-P) and 2-methyl-4-amino-5-hydroxymethyl pyrimidine pyrophosphate (HMP-PP) to form thiamine monophosphate (TMP). In Vibrio parahaemolyticus serotype O3:K6 (strain RIMD 2210633), this protein is Thiamine-phosphate synthase.